Here is a 323-residue protein sequence, read N- to C-terminus: Small ribosomal subunit protein uS3 (323 aa).

The 70-residue stretch at Ile17–Asp86 folds into the KH type-2 domain. The interval Ala251–Glu303 is disordered. A compositionally biased stretch (acidic residues) spans Gly270–Glu303.

The protein belongs to the universal ribosomal protein uS3 family. In terms of assembly, part of the 30S ribosomal subunit.

In terms of biological role, binds the lower part of the 30S subunit head. In Haloquadratum walsbyi (strain DSM 16790 / HBSQ001), this protein is Small ribosomal subunit protein uS3.